The primary structure comprises 579 residues: CTP synthase (579 aa).

The 249-residue stretch at 310–558 (YVELHDAYLS…VAAAIGCLDQ (249 aa)) folds into the Glutamine amidotransferase type-1 domain. Active-site for GATase activity residues include cysteine 402, histidine 531, and glutamate 533.

This sequence belongs to the CTP synthase family.

It catalyses the reaction UTP + L-glutamine + ATP + H2O = CTP + L-glutamate + ADP + phosphate + 2 H(+). The protein operates within pyrimidine metabolism; CTP biosynthesis via de novo pathway; CTP from UDP: step 2/2. Catalyzes the ATP-dependent amination of UTP to CTP with either L-glutamine or ammonia as the source of nitrogen. The protein is CTP synthase (pyr-7) of Neurospora crassa (strain ATCC 24698 / 74-OR23-1A / CBS 708.71 / DSM 1257 / FGSC 987).